A 1197-amino-acid polypeptide reads, in one-letter code: ATP-dependent helicase/nuclease subunit A (1197 aa).

One can recognise a UvrD-like helicase ATP-binding domain in the interval 2 to 458 (KNWTTEQQAA…IDLAKNFRSR (457 aa)). 23–30 (AAAGSGKT) contacts ATP. Positions 485-774 (RAALYQGASF…RIMSIHKSKG (290 aa)) constitute a UvrD-like helicase C-terminal domain.

Belongs to the helicase family. AddA subfamily. Heterodimer of AddA and AddB/RexB. Requires Mg(2+) as cofactor.

It catalyses the reaction Couples ATP hydrolysis with the unwinding of duplex DNA by translocating in the 3'-5' direction.. The catalysed reaction is ATP + H2O = ADP + phosphate + H(+). Functionally, the heterodimer acts as both an ATP-dependent DNA helicase and an ATP-dependent, dual-direction single-stranded exonuclease. Recognizes the chi site generating a DNA molecule suitable for the initiation of homologous recombination. The AddA nuclease domain is required for chi fragment generation; this subunit has the helicase and 3' -&gt; 5' nuclease activities. This Alkaliphilus metalliredigens (strain QYMF) protein is ATP-dependent helicase/nuclease subunit A.